The chain runs to 395 residues: L-lactate dehydrogenase (395 aa).

One can recognise an FMN hydroxy acid dehydrogenase domain in the interval 1–380 (MIISAASDYR…SKDSLVQELS (380 aa)). Residue tyrosine 24 coordinates substrate. FMN is bound by residues serine 106 and glutamine 127. Tyrosine 129 serves as a coordination point for substrate. Residue threonine 155 participates in FMN binding. Arginine 164 contributes to the substrate binding site. An FMN-binding site is contributed by lysine 251. Histidine 275 (proton acceptor) is an active-site residue. A substrate-binding site is contributed by arginine 278. 306-330 (DSGIRNGLDVVRMIALGADSVLLGR) is an FMN binding site.

Belongs to the FMN-dependent alpha-hydroxy acid dehydrogenase family. It depends on FMN as a cofactor.

It is found in the cell inner membrane. The enzyme catalyses (S)-lactate + A = pyruvate + AH2. Its function is as follows. Catalyzes the conversion of L-lactate to pyruvate. Is coupled to the respiratory chain. The polypeptide is L-lactate dehydrogenase (Enterobacter sp. (strain 638)).